A 135-amino-acid polypeptide reads, in one-letter code: MTEILTTSNSAEDLLDMDGRVSEQRLAQLRIRQQQERVTKELRDVIQIHQCKKGIFCLVKQAKISYEITATDHRLSYELGPQRQKFTCMVGINPIVITQQSGDTKGCIHCSCDSIECTYTLLKTLCGLRDLLPMN.

The protein belongs to the adenoviridae E3_15 family.

In terms of biological role, protects virus-infected cells from TNF-induced cytolysis. In Human adenovirus B serotype 7 (HAdV-7), this protein is Early E3 15.3 kDa protein.